A 95-amino-acid polypeptide reads, in one-letter code: MASSIVSSMFLFLLLLLVFPHIDNVLGARMELRELGEINYADPLGFTRPIVPIHVPGFPPRRPTIPQLPPYRPRRCPFCYPPPPPKAFPKNSPSH.

A signal peptide spans 1–27 (MASSIVSSMFLFLLLLLVFPHIDNVLG).

As to expression, expressed in leaves, flowers and stems, but not in roots.

The protein resides in the secreted. It is found in the cell wall. Functionally, maybe involved in defense responses to X.campestris, but probably not a X.campestris pv. campestris race 750 (e.g. Xcc750) resistance gene; according to genetic data, linked to a locus influencing resistance to Xcc750. In Arabidopsis thaliana (Mouse-ear cress), this protein is Protein ECS1.